The chain runs to 38 residues: Large ribosomal subunit protein bL36 (38 aa).

It belongs to the bacterial ribosomal protein bL36 family.

This chain is Large ribosomal subunit protein bL36, found in Roseiflexus sp. (strain RS-1).